The following is a 453-amino-acid chain: Bifunctional protein GlmU (453 aa).

The segment at 1 to 225 (MHAHVILAAG…AEEALGVNTR (225 aa)) is pyrophosphorylase. Residues 7–10 (LAAG), lysine 21, glutamine 72, and 77–78 (GT) contribute to the UDP-N-acetyl-alpha-D-glucosamine site. A Mg(2+)-binding site is contributed by aspartate 102. UDP-N-acetyl-alpha-D-glucosamine is bound by residues glycine 138, glutamate 152, asparagine 167, and asparagine 223. Asparagine 223 contacts Mg(2+). The interval 226–246 (EELARVEGVLLRRLRAEWMGK) is linker. The N-acetyltransferase stretch occupies residues 247–453 (GVRMILPETI…GYALRKLGEG (207 aa)). The UDP-N-acetyl-alpha-D-glucosamine site is built by arginine 329 and lysine 347. Residue histidine 359 is the Proton acceptor of the active site. Positions 362 and 373 each coordinate UDP-N-acetyl-alpha-D-glucosamine. Residues alanine 376, 382–383 (NY), serine 401, alanine 419, and arginine 436 contribute to the acetyl-CoA site.

The protein in the N-terminal section; belongs to the N-acetylglucosamine-1-phosphate uridyltransferase family. This sequence in the C-terminal section; belongs to the transferase hexapeptide repeat family. As to quaternary structure, homotrimer. Mg(2+) is required as a cofactor.

The protein resides in the cytoplasm. It carries out the reaction alpha-D-glucosamine 1-phosphate + acetyl-CoA = N-acetyl-alpha-D-glucosamine 1-phosphate + CoA + H(+). The enzyme catalyses N-acetyl-alpha-D-glucosamine 1-phosphate + UTP + H(+) = UDP-N-acetyl-alpha-D-glucosamine + diphosphate. It participates in nucleotide-sugar biosynthesis; UDP-N-acetyl-alpha-D-glucosamine biosynthesis; N-acetyl-alpha-D-glucosamine 1-phosphate from alpha-D-glucosamine 6-phosphate (route II): step 2/2. The protein operates within nucleotide-sugar biosynthesis; UDP-N-acetyl-alpha-D-glucosamine biosynthesis; UDP-N-acetyl-alpha-D-glucosamine from N-acetyl-alpha-D-glucosamine 1-phosphate: step 1/1. It functions in the pathway bacterial outer membrane biogenesis; LPS lipid A biosynthesis. In terms of biological role, catalyzes the last two sequential reactions in the de novo biosynthetic pathway for UDP-N-acetylglucosamine (UDP-GlcNAc). The C-terminal domain catalyzes the transfer of acetyl group from acetyl coenzyme A to glucosamine-1-phosphate (GlcN-1-P) to produce N-acetylglucosamine-1-phosphate (GlcNAc-1-P), which is converted into UDP-GlcNAc by the transfer of uridine 5-monophosphate (from uridine 5-triphosphate), a reaction catalyzed by the N-terminal domain. This chain is Bifunctional protein GlmU, found in Thermus thermophilus (strain ATCC BAA-163 / DSM 7039 / HB27).